Reading from the N-terminus, the 146-residue chain is Late protein OPG112 (146 aa).

A helical transmembrane segment spans residues 10 to 32 (LAMTAFFGELSTLDIMALIMSIF).

Belongs to the orthopoxvirus OPG112 family.

The protein localises to the host membrane. The protein resides in the host cytoplasm. Contributes to the formation of crescents and immature virions (IV). Interacts with phosphatidylinositol-3-phosphate (PI3P) and phosphatidylinositol-4-phosphate (PI4P) lipids in order to form virion membranes. Mechanistically, mediates proper formation of OPG125-hexamers, and hence the honey comb lattice and spherical immature virus. This is Late protein OPG112 (OPG112) from Bos taurus (Bovine).